Reading from the N-terminus, the 506-residue chain is NAD(P)H-quinone oxidoreductase subunit 2 (506 aa).

A run of 13 helical transmembrane segments spans residues 14-34 (AIIP…VDLA), 42-62 (WAPI…ALQW), 79-99 (LAIS…LISW), 108-128 (PIGE…LLCG), 132-152 (LISV…LSGY), 167-187 (LLVG…LYGL), 206-226 (FITS…IAAV), 240-260 (PTPV…AFAI), 276-296 (LLFT…ALAQ), 302-322 (MLAY…VSGT), 330-350 (VLYL…VILF), 374-394 (LGLS…GFFG), and 409-429 (LLVI…ISVI).

Belongs to the complex I subunit 2 family. As to quaternary structure, NDH-1 can be composed of about 15 different subunits; different subcomplexes with different compositions have been identified which probably have different functions.

It is found in the cellular thylakoid membrane. The catalysed reaction is a plastoquinone + NADH + (n+1) H(+)(in) = a plastoquinol + NAD(+) + n H(+)(out). It carries out the reaction a plastoquinone + NADPH + (n+1) H(+)(in) = a plastoquinol + NADP(+) + n H(+)(out). Functionally, NDH-1 shuttles electrons from an unknown electron donor, via FMN and iron-sulfur (Fe-S) centers, to quinones in the respiratory and/or the photosynthetic chain. The immediate electron acceptor for the enzyme in this species is believed to be plastoquinone. Couples the redox reaction to proton translocation, and thus conserves the redox energy in a proton gradient. Cyanobacterial NDH-1 also plays a role in inorganic carbon-concentration. The chain is NAD(P)H-quinone oxidoreductase subunit 2 from Prochlorococcus marinus (strain MIT 9215).